Consider the following 283-residue polypeptide: NADPH-dependent 7-cyano-7-deazaguanine reductase (283 aa).

Substrate is bound at residue 89–91 (IES). 91-92 (SK) serves as a coordination point for NADPH. Cysteine 190 functions as the Thioimide intermediate in the catalytic mechanism. The Proton donor role is filled by aspartate 197. 229–230 (HE) serves as a coordination point for substrate. Position 258 to 259 (258 to 259 (RG)) interacts with NADPH.

It belongs to the GTP cyclohydrolase I family. QueF type 2 subfamily. As to quaternary structure, homodimer.

The protein localises to the cytoplasm. It carries out the reaction 7-aminomethyl-7-carbaguanine + 2 NADP(+) = 7-cyano-7-deazaguanine + 2 NADPH + 3 H(+). The protein operates within tRNA modification; tRNA-queuosine biosynthesis. Functionally, catalyzes the NADPH-dependent reduction of 7-cyano-7-deazaguanine (preQ0) to 7-aminomethyl-7-deazaguanine (preQ1). The chain is NADPH-dependent 7-cyano-7-deazaguanine reductase from Aromatoleum aromaticum (strain DSM 19018 / LMG 30748 / EbN1) (Azoarcus sp. (strain EbN1)).